Consider the following 93-residue polypeptide: YcgL domain-containing protein VIBHAR_01387 (93 aa).

The YcgL domain occupies 1-84 (MLCSIYKSSR…PPENLLEKYK (84 aa)).

The protein is YcgL domain-containing protein VIBHAR_01387 of Vibrio campbellii (strain ATCC BAA-1116).